Reading from the N-terminus, the 132-residue chain is Glycine cleavage system H protein (132 aa).

Residues 24–107 (TATIGLSAFA…GEEGWLIKVR (84 aa)) enclose the Lipoyl-binding domain. Lys65 bears the N6-lipoyllysine mark.

The protein belongs to the GcvH family. As to quaternary structure, the glycine cleavage system is composed of four proteins: P, T, L and H. The cofactor is (R)-lipoate.

The glycine cleavage system catalyzes the degradation of glycine. The H protein shuttles the methylamine group of glycine from the P protein to the T protein. The polypeptide is Glycine cleavage system H protein (Synechocystis sp. (strain ATCC 27184 / PCC 6803 / Kazusa)).